We begin with the raw amino-acid sequence, 458 residues long: Adenylosuccinate synthetase (458 aa).

Residues 17 to 23 (GDEGKGK) and 45 to 47 (GHT) each bind GTP. Aspartate 18 (proton acceptor) is an active-site residue. Mg(2+) is bound by residues aspartate 18 and glycine 45. Residues 18–21 (DEGK), 43–46 (NAGH), threonine 137, arginine 151, glutamine 247, threonine 262, and arginine 330 each bind IMP. Residue histidine 46 is the Proton donor of the active site. Residue 326–332 (VTTGRSR) participates in substrate binding. Residues arginine 332, 358–360 (KLD), and 440–442 (STS) contribute to the GTP site.

Belongs to the adenylosuccinate synthetase family. Homodimer. Mg(2+) serves as cofactor.

The protein resides in the cytoplasm. The catalysed reaction is IMP + L-aspartate + GTP = N(6)-(1,2-dicarboxyethyl)-AMP + GDP + phosphate + 2 H(+). The protein operates within purine metabolism; AMP biosynthesis via de novo pathway; AMP from IMP: step 1/2. Functionally, plays an important role in the de novo pathway of purine nucleotide biosynthesis. Catalyzes the first committed step in the biosynthesis of AMP from IMP. The polypeptide is Adenylosuccinate synthetase (Delftia acidovorans (strain DSM 14801 / SPH-1)).